The primary structure comprises 387 residues: GTP-binding protein 10 (387 aa).

One can recognise an Obg domain in the interval 13–148 (GNFIDNLRLF…RVIHLDLKLI (136 aa)). The OBG-type G domain maps to 149 to 344 (ADIGLVGFPN…LKNCIRKSLD (196 aa)). GTP contacts are provided by residues 155-162 (GFPNAGKS), 202-206 (DLPGL), and 278-281 (NKMD).

This sequence belongs to the TRAFAC class OBG-HflX-like GTPase superfamily. OBG GTPase family.

It is found in the nucleus. The protein resides in the nucleolus. Functionally, may be involved in the ribosome maturation process. This Bos taurus (Bovine) protein is GTP-binding protein 10 (GTPBP10).